The chain runs to 259 residues: Short-chain dehydrogenase reductase 5 (259 aa).

An NAD(+)-binding site is contributed by 12 to 36; the sequence is IITGGASGIGAEAARLFTDHGAKVV. Ser144 is a substrate binding site. The active-site Proton acceptor is the Tyr157.

It belongs to the short-chain dehydrogenases/reductases (SDR) family.

The chain is Short-chain dehydrogenase reductase 5 (SDR5) from Arabidopsis thaliana (Mouse-ear cress).